The chain runs to 174 residues: Ferredoxin-thioredoxin reductase, variable chain, chloroplastic (174 aa).

A chloroplast-targeting transit peptide spans 1–62; that stretch reads MTTGVAVMSS…RTRARLAICC (62 aa). Residues 69–81 are compositionally biased toward low complexity; sequence DSSTGFDSSSSSP. The interval 69–89 is disordered; that stretch reads DSSTGFDSSSSSPPEEDEELK. Phosphoserine occurs at positions 70 and 71.

The protein belongs to the ferredoxin thioredoxin reductase alpha subunit family. Heterodimer of subunit A (variable subunit) and subunit B (catalytic subunit). Heterodimeric FTR forms a complex with ferredoxin and thioredoxin.

It localises to the plastid. The protein localises to the chloroplast. Variable subunit of the ferredoxin-thioredoxin reductase (FTR), which catalyzes the two-electron reduction of thioredoxins by the electrons provided by reduced ferredoxin. The polypeptide is Ferredoxin-thioredoxin reductase, variable chain, chloroplastic (FTRV) (Spinacia oleracea (Spinach)).